The primary structure comprises 328 residues: Nucleotide-binding protein BLD_0430 (328 aa).

The segment at 1-35 (MNQQTTNRDTGEAAATNAPANSATSTSTPDNQPTP) is disordered. Over residues 13 to 29 (AAATNAPANSATSTSTP) the composition is skewed to low complexity. 46–53 (GMSGAGRS) is a binding site for ATP. 101–104 (DVRS) contributes to the GTP binding site.

It belongs to the RapZ-like family.

Functionally, displays ATPase and GTPase activities. The chain is Nucleotide-binding protein BLD_0430 from Bifidobacterium longum (strain DJO10A).